Reading from the N-terminus, the 547-residue chain is MYYYLEIECESPVKDIFTCNKRRASKVVGNSFGGDHFNFRLGEIKLLSMDFPSSKVPEVEETSLGHGVVHLYRVFPSESHEFDAPGLILAILAIPLYMSPSDVLGFLGEKHCKSIQHIRLLKTKDPNRIMALLKFKDQASVIRFYTEFNGKAFSQIDPETCHVLHIDKVNIKYPMESSDSSSTEQQLVGPSSKPFASTTPALIELPTCVVCLERMDSSITGLITIVCQHTFHCPCLQKWGNSSCPVCRYTQKVQSSEFQSKCTVCCYDKDLWICLICGNIGCGRYHDAHAKQHYVDTAHCYAMELETQRVWDYAGDNYVHRLLQSETDGKLVELSTDGKSSGWTGSSATESKLRDKMGLEYTQILVSQLESQRLYYESHLSNMSQKLSRVNEELVLKTKIATASSNANTDLRSRVDISESKLKKRDDKLKRVSSQLEHLKHNYEEEKSMNENLLVRIQTLEKQNTTKSDQIVSMQFQINDLNEQLRDLMFTISASQEIQKMGQSEELQNGTIVLPNNSTVRSNSVKSKKKKKKKPVVPSSSGSLGTD.

An RING-type zinc finger spans residues cysteine 208 to arginine 248. Residues proline 245 to glycine 338 form a UBP-type; degenerate zinc finger. Residues cysteine 262, cysteine 265, cysteine 274, cysteine 277, cysteine 282, histidine 289, histidine 293, and histidine 299 each contribute to the Zn(2+) site. Residues leucine 514–asparagine 523 show a composition bias toward polar residues. The tract at residues leucine 514–aspartate 547 is disordered. Residues lysine 526–proline 535 are compositionally biased toward basic residues.

It is found in the cytoplasm. Its function is as follows. May act as a cytoplasmic retention protein with a role in regulating nuclear transport. The chain is RING finger protein ETP1 homolog from Schizosaccharomyces pombe (strain 972 / ATCC 24843) (Fission yeast).